The following is a 177-amino-acid chain: ATP-dependent protease subunit HslV (177 aa).

Residue Thr-6 is part of the active site. Na(+)-binding residues include Ser-161, Cys-164, and Thr-167.

The protein belongs to the peptidase T1B family. HslV subfamily. As to quaternary structure, a double ring-shaped homohexamer of HslV is capped on each side by a ring-shaped HslU homohexamer. The assembly of the HslU/HslV complex is dependent on binding of ATP.

It localises to the cytoplasm. The catalysed reaction is ATP-dependent cleavage of peptide bonds with broad specificity.. With respect to regulation, allosterically activated by HslU binding. Functionally, protease subunit of a proteasome-like degradation complex believed to be a general protein degrading machinery. The protein is ATP-dependent protease subunit HslV of Thermodesulfovibrio yellowstonii (strain ATCC 51303 / DSM 11347 / YP87).